The sequence spans 758 residues: Probable C-mannosyltransferase DPY19L2 (758 aa).

A disordered region spans residues 1-58; sequence MRKQGVSSKRLQSSGRSQSKGRRGASLAREPEVEEEMEKSALGGGKLPRGSWRSSPGR. The Nuclear portion of the chain corresponds to 1–107; sequence MRKQGVSSKR…ELQARRFSSR (107 aa). Residues 7–18 are compositionally biased toward low complexity; it reads SSKRLQSSGRSQ. The helical transmembrane segment at 108 to 128 threads the bilayer; the sequence is TTLGIAVFVAILHWLHLVTLF. The Perinuclear space portion of the chain corresponds to 129–194; sequence ENDRHFSHLS…INAIKRFHLY (66 aa). A helical membrane pass occupies residues 195–215; the sequence is PEVIIASWYCTFMGIMNLFGL. At 216 to 241 the chain is on the nuclear side; that stretch reads ETKTCWNVTRIEPLNEVQSCEGLGDP. Helical transmembrane passes span 242–262 and 263–283; these read ACFY…LFFM and YGAY…CFFF. Residues 284–296 are Nuclear-facing; sequence NHGEATRVMWTPP. Residues 297-317 form a helical membrane-spanning segment; it reads LRESFSYPFLVLQMCILTLIL. Residues 318–343 lie on the Perinuclear space side of the membrane; that stretch reads RTSSNDRRPFIALCLSNVAFMLPWQF. The chain crosses the membrane as a helical span at residues 344–364; the sequence is AQFILFTQIASLFPMYVVGYI. The Nuclear portion of the chain corresponds to 365-371; it reads EPSKFQK. The chain crosses the membrane as a helical span at residues 372–392; the sequence is IIYMNMISVTLSFILMFGNSM. The Perinuclear space segment spans residues 393 to 422; sequence YLSSYYSSSLLMTWAIILKRNEIQKLGVSK. A helical transmembrane segment spans residues 423–443; it reads LNFWLIQGSAWWCGTIILKFL. The Nuclear segment spans residues 444-488; the sequence is TSKILGVSDHIRLSDLIAARILRYTDFDTLIYTCAPEFDFMEKAT. A helical transmembrane segment spans residues 489 to 509; it reads PLRYTKTLLLPVVMVITCFIF. Topologically, residues 510 to 533 are perinuclear space; sequence KKTVRDISYVLATNIYLRKQLLEH. The chain crosses the membrane as a helical span at residues 534 to 554; that stretch reads SELAFHTLQLLVFTALAILIM. Topologically, residues 555–758 are nuclear; sequence RLKMFLTPHM…NSVYRVLKVN (204 aa).

The protein belongs to the dpy-19 family. As to quaternary structure, interacts with FAM209. In terms of tissue distribution, widely expressed with high expression in testis. Not detectable in ejaculated sperm (at protein level).

The protein localises to the nucleus inner membrane. Functionally, probable C-mannosyltransferase that mediates C-mannosylation of tryptophan residues on target proteins. In terms of biological role, required during spermatogenesis for sperm head elongation and acrosome formation. Also plays a role in acrosome attachment to the nuclear envelope. This is Probable C-mannosyltransferase DPY19L2 from Homo sapiens (Human).